The chain runs to 539 residues: T-complex protein 1 subunit delta (539 aa).

The segment at 1–29 is disordered; it reads MPENVAPRSGATAGAAGGRGKGAYQDRDK. Position 19 is an omega-N-methylarginine (Arg-19). The residue at position 21 (Lys-21) is an N6-acetyllysine. The residue at position 36 (Ser-36) is a Phosphoserine. Residue Gly-53 participates in ADP binding. Gly-53 serves as a coordination point for ATP. Residue Asp-104 participates in Mg(2+) binding. Positions 105, 106, 107, 108, 172, 173, and 174 each coordinate ADP. Gly-105 and Thr-106 together coordinate ATP. Residue Lys-174 coordinates ATP. Phosphoserine is present on residues Ser-184 and Ser-202. Residues Lys-288, Lys-302, Lys-319, and Lys-326 each carry the N6-acetyllysine modification. Gly-425 contacts ADP. Ser-444 bears the Phosphoserine mark. Gln-510 contributes to the ADP binding site.

The protein belongs to the TCP-1 chaperonin family. In terms of assembly, component of the chaperonin-containing T-complex (TRiC), a hexadecamer composed of two identical back-to-back stacked rings enclosing a protein folding chamber. Each ring is made up of eight different subunits: TCP1/CCT1, CCT2, CCT3, CCT4, CCT5, CCT6A/CCT6, CCT7, CCT8. Interacts with PACRG. Interacts with DNAAF4. Interacts with DLEC1.

The protein localises to the cytoplasm. It is found in the melanosome. The protein resides in the cytoskeleton. It localises to the microtubule organizing center. Its subcellular location is the centrosome. The protein localises to the cilium basal body. The enzyme catalyses ATP + H2O = ADP + phosphate + H(+). Its function is as follows. Component of the chaperonin-containing T-complex (TRiC), a molecular chaperone complex that assists the folding of actin, tubulin and other proteins upon ATP hydrolysis. The TRiC complex mediates the folding of WRAP53/TCAB1, thereby regulating telomere maintenance. As part of the TRiC complex may play a role in the assembly of BBSome, a complex involved in ciliogenesis regulating transports vesicles to the cilia. This chain is T-complex protein 1 subunit delta (CCT4), found in Homo sapiens (Human).